Here is a 217-residue protein sequence, read N- to C-terminus: Cytochrome b5 domain-containing protein 1 (217 aa).

One can recognise a Cytochrome b5 heme-binding domain in the interval 6 to 72 (PRFYTPREVS…NPKTGDVKTH (67 aa)). 2 residues coordinate heme: H41 and H72.

It belongs to the cytochrome b5 family.

It localises to the cytoplasm. It is found in the cytoskeleton. The protein localises to the cilium axoneme. Radial spoke stalk protein that binds heme under oxidizing conditions. Required for the coordinated beating of multiple cilia maybe by functioning in a redox signaling pathway. This is Cytochrome b5 domain-containing protein 1 (cyb5d1) from Xenopus tropicalis (Western clawed frog).